Here is a 66-residue protein sequence, read N- to C-terminus: Conotoxin Lt3.5 (66 aa).

The first 20 residues, 1 to 20 (MMSKLGALLTICLLLFPLTA), serve as a signal peptide directing secretion. Residues 21-53 (VPLDGDQPLDRHAERMHDGISPKRHPWFDPVKR) constitute a propeptide that is removed on maturation. 3 cysteine pairs are disulfide-bonded: Cys-54–Cys-66, Cys-55–Cys-62, and Cys-59–Cys-65. Pro-64 is subject to 4-hydroxyproline.

It belongs to the conotoxin M superfamily. In terms of tissue distribution, expressed by the venom duct.

Its subcellular location is the secreted. In Conus litteratus (Lettered cone), this protein is Conotoxin Lt3.5.